The primary structure comprises 224 residues: Polyadenylate-binding protein 2 (224 aa).

Residues 1–36 are compositionally biased toward acidic residues; it reads MADEDITLNEDQLLESLEETNGEQETEIATEVEEEG. Residues 1-40 are disordered; sequence MADEDITLNEDQLLESLEETNGEQETEIATEVEEEGSMQI. Residues 9-74 adopt a coiled-coil conformation; that stretch reads NEDQLLESLE…QSEVDKQMAG (66 aa). One can recognise an RRM domain in the interval 96-173; it reads RSVYVGNVDY…RQIKVMSKRT (78 aa).

Interacts with ZC3H3. As to expression, expressed ubiquitously in all transcriptionally active cells.

The protein resides in the nucleus. Its subcellular location is the cytoplasm. Its function is as follows. Involved in the 3'-end formation of mRNA precursors (pre-mRNA) by the addition of a poly(A) tail of 200-250 nt to the upstream cleavage product. Stimulates poly(A) polymerase (PAPOLA) conferring processivity on the poly(A) tail elongation reaction and also controls the poly(A) tail length. Increases the affinity of poly(A) polymerase for RNA. Binds to poly(A) and to poly(G) with high affinity. May protect the poly(A) tail from degradation. Plays a role in the positive regulation of alpha-1,3 fucosylation, possibly by cooperating with swm which regulates nuclear export of fucosyltransferase FucTA. Involved in germline stem cell transit amplification, differentiation and mitosis-to-meiosis transition. The chain is Polyadenylate-binding protein 2 from Drosophila melanogaster (Fruit fly).